The primary structure comprises 152 residues: Snaclec coagulation factor IX/factor X-binding protein subunit A (152 aa).

An N-terminal signal peptide occupies residues 1 to 23 (MGRFIFMSFGLLVVAASLRGTGA). Positions 24-152 (DCLSGWSSYE…GQQNPFVCEA (129 aa)) constitute a C-type lectin domain. 3 cysteine pairs are disulfide-bonded: cysteine 25–cysteine 36, cysteine 53–cysteine 150, and cysteine 125–cysteine 142. 3 residues coordinate Ca(2+): serine 64, glutamate 66, and glutamate 70. Glutamate 151 is a Ca(2+) binding site.

The protein belongs to the snaclec family. Heterodimer of subunits A and B; disulfide-linked. In terms of tissue distribution, expressed by the venom gland.

It localises to the secreted. Functionally, anticoagulant protein which binds to the gamma-carboxyglutamic acid-domain regions of factors IX (F9) and factor X (F10) in the presence of calcium with a 1 to 1 stoichiometry. This Protobothrops flavoviridis (Habu) protein is Snaclec coagulation factor IX/factor X-binding protein subunit A.